A 382-amino-acid chain; its full sequence is Chaperone protein DnaJ (382 aa).

In terms of domain architecture, J spans 5–69 (DYYEILGVSK…EKRARYDRFG (65 aa)). The CR-type zinc-finger motif lies at 137 to 219 (GKETEIEIPR…CGGTGRVKRR (83 aa)). The Zn(2+) site is built by Cys-150, Cys-153, Cys-167, Cys-170, Cys-193, Cys-196, Cys-207, and Cys-210. 4 CXXCXGXG motif repeats span residues 150–157 (CDTCQGSG), 167–174 (CPHCHGSG), 193–200 (CPVCGGTG), and 207–214 (CPTCGGTG). The disordered stretch occupies residues 154-175 (QGSGAKPGTSPTSCPHCHGSGQ).

It belongs to the DnaJ family. In terms of assembly, homodimer. Zn(2+) is required as a cofactor.

It localises to the cytoplasm. Functionally, participates actively in the response to hyperosmotic and heat shock by preventing the aggregation of stress-denatured proteins and by disaggregating proteins, also in an autonomous, DnaK-independent fashion. Unfolded proteins bind initially to DnaJ; upon interaction with the DnaJ-bound protein, DnaK hydrolyzes its bound ATP, resulting in the formation of a stable complex. GrpE releases ADP from DnaK; ATP binding to DnaK triggers the release of the substrate protein, thus completing the reaction cycle. Several rounds of ATP-dependent interactions between DnaJ, DnaK and GrpE are required for fully efficient folding. Also involved, together with DnaK and GrpE, in the DNA replication of plasmids through activation of initiation proteins. The chain is Chaperone protein DnaJ from Geobacillus kaustophilus (strain HTA426).